A 115-amino-acid polypeptide reads, in one-letter code: MNLSLTFMTDVILALLLVMIAFWLPQLNIYTEKYSSYECGFDPMGSARLPFSMKFFLVAITFLLFDLEIALLLPLPWASQTTNLKLMLTMALLLISILAAGLAYEWSQKGLEWEE.

Transmembrane regions (helical) follow at residues 5-25 (LTFMTDVILALLLVMIAFWLP), 55-75 (FFLVAITFLLFDLEIALLLPL), and 86-106 (LMLTMALLLISILAAGLAYEW).

Belongs to the complex I subunit 3 family. As to quaternary structure, core subunit of respiratory chain NADH dehydrogenase (Complex I) which is composed of 45 different subunits. Interacts with TMEM186. Interacts with TMEM242.

The protein resides in the mitochondrion inner membrane. The enzyme catalyses a ubiquinone + NADH + 5 H(+)(in) = a ubiquinol + NAD(+) + 4 H(+)(out). Core subunit of the mitochondrial membrane respiratory chain NADH dehydrogenase (Complex I) which catalyzes electron transfer from NADH through the respiratory chain, using ubiquinone as an electron acceptor. Essential for the catalytic activity of complex I. The sequence is that of NADH-ubiquinone oxidoreductase chain 3 from Avahi unicolor (Sambirano woolly lemur).